A 175-amino-acid polypeptide reads, in one-letter code: Large ribosomal subunit protein uL6 (175 aa).

It belongs to the universal ribosomal protein uL6 family. Part of the 50S ribosomal subunit.

Functionally, this protein binds to the 23S rRNA, and is important in its secondary structure. It is located near the subunit interface in the base of the L7/L12 stalk, and near the tRNA binding site of the peptidyltransferase center. The sequence is that of Large ribosomal subunit protein uL6 from Xylella fastidiosa (strain 9a5c).